Consider the following 338-residue polypeptide: Heat-inducible transcription repressor HrcA (338 aa).

The protein belongs to the HrcA family.

In terms of biological role, negative regulator of class I heat shock genes (grpE-dnaK-dnaJ and groELS operons). Prevents heat-shock induction of these operons. The chain is Heat-inducible transcription repressor HrcA from Streptomyces avermitilis (strain ATCC 31267 / DSM 46492 / JCM 5070 / NBRC 14893 / NCIMB 12804 / NRRL 8165 / MA-4680).